We begin with the raw amino-acid sequence, 418 residues long: Hydroxysqualene dehydroxylase (418 aa).

The protein belongs to the HpnE family.

The enzyme catalyses squalene + FAD + H2O + H(+) = hydroxysqualene + FADH2. It functions in the pathway secondary metabolite biosynthesis; hopanoid biosynthesis. In terms of biological role, involved in the biosynthesis of the hopanoid precursor squalene (SQ) from farnesyl diphosphate (FPP). Catalyzes the third (last) step, the reduction of hydroxysqualene (HSQ) to SQ. The protein is Hydroxysqualene dehydroxylase of Rhodopseudomonas palustris (strain ATCC BAA-98 / CGA009).